The chain runs to 129 residues: Lysozyme C (129 aa).

Residues 1–129 (KVYGRCELAA…VNAWIRGCRL (129 aa)) form the C-type lysozyme domain. Disulfide bonds link cysteine 6/cysteine 127, cysteine 30/cysteine 115, cysteine 64/cysteine 80, and cysteine 76/cysteine 94. Residues glutamate 35 and aspartate 52 contribute to the active site.

It belongs to the glycosyl hydrolase 22 family. As to quaternary structure, monomer.

It is found in the secreted. The catalysed reaction is Hydrolysis of (1-&gt;4)-beta-linkages between N-acetylmuramic acid and N-acetyl-D-glucosamine residues in a peptidoglycan and between N-acetyl-D-glucosamine residues in chitodextrins.. Its function is as follows. Lysozymes have primarily a bacteriolytic function; those in tissues and body fluids are associated with the monocyte-macrophage system and enhance the activity of immunoagents. This is Lysozyme C (LYZ) from Syrmaticus reevesii (Reeves's pheasant).